Here is a 708-residue protein sequence, read N- to C-terminus: O-antigen chain terminator bifunctional methyltransferase/kinase WbdD (708 aa).

Positions 1 to 210 (MTKDLNTLVS…VPRPMYLVSN (210 aa)) are methyltransferase. S-adenosyl-L-methionine-binding positions include 16-17 (YQ), Arg-36, Gly-61, 82-87 (DFQQEN), 108-111 (GRIE), and Leu-128. Residues 211–459 (HRVLINDFNQ…AKLPSAEQQR (249 aa)) form a kinase region. ATP is bound by residues Pro-229, His-237, 241-243 (RRY), Lys-252, Glu-274, 309-311 (EKL), Met-358, and Asp-369. A coiled-coil region spans residues 485 to 594 (AGSEALRGQI…EIEKIHRSRS (110 aa)). Residues 601–669 (YRYLGLQIHL…RLYRRMNPLP (69 aa)) form a required for membrane-binding region. The tract at residues 687 to 708 (VMHPELLPPEVYEIYLKLTKNK) is required for localizing WbdA to the membrane.

This sequence belongs to the WbdD family. As to quaternary structure, interacts with WbdA.

It is found in the cell inner membrane. It carries out the reaction 3-O-phospho-alpha-D-Man-(1-&gt;2)-alpha-D-Man-(1-&gt;2)-[alpha-D-Man-(1-&gt;3)-alpha-D-Man-(1-&gt;3)-alpha-D-Man-(1-&gt;2)-alpha-D-Man-(1-&gt;2)](n)-alpha-D-Man-(1-&gt;3)-alpha-D-Man-(1-&gt;3)-alpha-D-Man-(1-&gt;3)-alpha-D-GlcNAc-di-trans,octa-cis-undecaprenyl diphosphate + S-adenosyl-L-methionine = 3-O-methylphospho-alpha-D-Man-(1-&gt;2)-alpha-D-Man-(1-&gt;2)-[alpha-D-Man-(1-&gt;3)-alpha-D-Man-(1-&gt;3)-alpha-D-Man-(1-&gt;2)-alpha-D-Man-(1-&gt;2)](n)-alpha-D-Man-(1-&gt;3)-alpha-D-Man-(1-&gt;3)-alpha-D-Man-(1-&gt;3)-alpha-D-GlcNAc-di-trans,octa-cis-undecaprenyl diphosphate + S-adenosyl-L-homocysteine. It catalyses the reaction alpha-D-Man-(1-&gt;2)-alpha-D-Man-(1-&gt;2)-[alpha-D-Man-(1-&gt;3)-alpha-D-Man-(1-&gt;3)-alpha-D-Man-(1-&gt;2)-alpha-D-Man-(1-&gt;2)](n)-alpha-D-Man-(1-&gt;3)-alpha-D-Man-(1-&gt;3)-alpha-D-Man-(1-&gt;3)-alpha-D-GlcNAc-di-trans,octa-cis-undecaprenyl diphosphate + ATP = 3-O-phospho-alpha-D-Man-(1-&gt;2)-alpha-D-Man-(1-&gt;2)-[alpha-D-Man-(1-&gt;3)-alpha-D-Man-(1-&gt;3)-alpha-D-Man-(1-&gt;2)-alpha-D-Man-(1-&gt;2)](n)-alpha-D-Man-(1-&gt;3)-alpha-D-Man-(1-&gt;3)-alpha-D-Man-(1-&gt;3)-alpha-D-GlcNAc-di-trans,octa-cis-undecaprenyl diphosphate + ADP + H(+). Its pathway is bacterial outer membrane biogenesis; LPS O-antigen biosynthesis. Regulates the length of the LPS O-antigen polysaccharide chain. Stops the polymerization of the chain by phosphorylating and then methylating the phosphate on the terminal sugar. This terminal modification is essential for export of the O-antigen across the inner membrane. WbdD is also required for correct localization of the WbdA mannosyltransferase. This is O-antigen chain terminator bifunctional methyltransferase/kinase WbdD from Escherichia coli.